We begin with the raw amino-acid sequence, 158 residues long: Transcription elongation factor GreA (158 aa).

Residues 45–72 adopt a coiled-coil conformation; it reads AEYHAAREQQSFIEGRIKQLEGELSHAE.

Belongs to the GreA/GreB family.

Functionally, necessary for efficient RNA polymerase transcription elongation past template-encoded arresting sites. The arresting sites in DNA have the property of trapping a certain fraction of elongating RNA polymerases that pass through, resulting in locked ternary complexes. Cleavage of the nascent transcript by cleavage factors such as GreA or GreB allows the resumption of elongation from the new 3'terminus. GreA releases sequences of 2 to 3 nucleotides. In Xanthomonas campestris pv. campestris (strain ATCC 33913 / DSM 3586 / NCPPB 528 / LMG 568 / P 25), this protein is Transcription elongation factor GreA.